A 351-amino-acid chain; its full sequence is UDP-N-acetylglucosamine--N-acetylmuramyl-(pentapeptide) pyrophosphoryl-undecaprenol N-acetylglucosamine transferase (351 aa).

Residues 13–15 (TGG), N125, R161, S189, I241, 260–265 (ALTVCE), and Q285 contribute to the UDP-N-acetyl-alpha-D-glucosamine site.

The protein belongs to the glycosyltransferase 28 family. MurG subfamily.

The protein localises to the cell inner membrane. It catalyses the reaction di-trans,octa-cis-undecaprenyl diphospho-N-acetyl-alpha-D-muramoyl-L-alanyl-D-glutamyl-meso-2,6-diaminopimeloyl-D-alanyl-D-alanine + UDP-N-acetyl-alpha-D-glucosamine = di-trans,octa-cis-undecaprenyl diphospho-[N-acetyl-alpha-D-glucosaminyl-(1-&gt;4)]-N-acetyl-alpha-D-muramoyl-L-alanyl-D-glutamyl-meso-2,6-diaminopimeloyl-D-alanyl-D-alanine + UDP + H(+). It functions in the pathway cell wall biogenesis; peptidoglycan biosynthesis. Cell wall formation. Catalyzes the transfer of a GlcNAc subunit on undecaprenyl-pyrophosphoryl-MurNAc-pentapeptide (lipid intermediate I) to form undecaprenyl-pyrophosphoryl-MurNAc-(pentapeptide)GlcNAc (lipid intermediate II). The chain is UDP-N-acetylglucosamine--N-acetylmuramyl-(pentapeptide) pyrophosphoryl-undecaprenol N-acetylglucosamine transferase from Haemophilus influenzae (strain 86-028NP).